The sequence spans 912 residues: Androgen receptor (912 aa).

The interval 1 to 550 (MEVQLGLGRV…PIDYYFPPQK (550 aa)) is modulating. The interaction with ZNF318 stretch occupies residues 1 to 579 (MEVQLGLGRV…GSCKVFFKRA (579 aa)). Disordered regions lie at residues 35 to 156 (QNPG…GPTF) and 204 to 236 (QQQQEVVSEGGSSGRAREAAGAPTSSKDSYLGG). S69 is subject to Phosphoserine; by CDK9. Position 82 is a phosphoserine (S82). A compositionally biased stretch (low complexity) spans 204 to 213 (QQQQEVVSEG). Polar residues predominate over residues 226 to 236 (PTSSKDSYLGG). The residue at position 233 (Y233) is a Phosphotyrosine; by CSK. S266 is modified (phosphoserine). Y277 is subject to Phosphotyrosine; by CSK and TNK2. 4 positions are modified to phosphotyrosine; by CSK: Y315, Y354, Y365, and Y370. The residue at position 371 (Y371) is a Phosphotyrosine; by CSK and TNK2. Residues 375–394 (LSLAGPPPPPPSPHPHARIK) form a disordered region. Over residues 379 to 388 (GPPPPPPSPH) the composition is skewed to pro residues. Residue K394 forms a Glycyl lysine isopeptide (Lys-Gly) (interchain with G-Cter in SUMO) linkage. Phosphotyrosine; by CSK is present on Y401. Positions 452-490 (LYGPCGGSGGGGTGESVSVTPYGYTRPQQGLTGQEGDFP) are disordered. Residues 455–465 (PCGGSGGGGTG) show a composition bias toward gly residues. K513 is covalently cross-linked (Glycyl lysine isopeptide (Lys-Gly) (interchain with G-Cter in SUMO)). 2 positions are modified to phosphotyrosine; by CSK: Y527 and Y544. Positions 544 to 911 (YYFPPQKTCL…GKVKPIYFHT (368 aa)) are interaction with LPXN. Positions 551–624 (TCLICGDEAS…AGMTLGARRL (74 aa)) form a DNA-binding region, nuclear receptor. NR C4-type zinc fingers lie at residues 552–572 (CLICGDEASGCHYGALTCGSC) and 588–612 (CASRNDCTIDKFRRKNCPPCRLRKC). Positions 564 to 654 (YGALTCGSCK…TEETTQKLTV (91 aa)) are interaction with HIPK3. An interaction with CCAR1 region spans residues 584 to 911 (QKYLCASRND…GKVKPIYFHT (328 aa)). Residues 617 to 911 (MTLGARRLKK…GKVKPIYFHT (295 aa)) are interaction with KAT7. S643 carries the phosphoserine; by STK4/MST1 modification. The NR LBD domain maps to 661–892 (ECQPIFLNVL…DFPEMMAEII (232 aa)). 17beta-hydroxy-5alpha-androstan-3-one-binding residues include N698 and R745. Glycyl lysine isopeptide (Lys-Gly) (interchain with G-Cter in ubiquitin) cross-links involve residues K838 and K840. Residue T870 participates in 17beta-hydroxy-5alpha-androstan-3-one binding. Y908 carries the phosphotyrosine; by CSK modification.

It belongs to the nuclear hormone receptor family. NR3 subfamily. In terms of assembly, binds DNA as a homodimer. Part of a ternary complex containing AR, EFCAB6/DJBP and PARK7. Interacts with HIPK3 and NR0B2 in the presence of androgen. The ligand binding domain interacts with KAT7/HBO1 in the presence of dihydrotestosterone. Interacts with EFCAB6/DJBP, PQBP1, RANBP9, RBAK, SPDEF, SRA1, TGFB1I1 and RREB1. Interacts with ZMIZ1/ZIMP10 and ZMIZ2/ZMIP7 which both enhance its transactivation activity. Interacts with SLC30A9 and RAD54L2/ARIP4. Interacts with MACROD1 (via macro domain). Interacts via the ligand-binding domain with LXXLL and FXXLF motifs from NCOA1, NCOA2, NCOA3 and MAGEA11. Interacts (via nuclear receptor DNA binding domain and nuclear receptor ligand binding domain) with NCOA4. The AR N-terminal poly-Gln region binds Ran resulting in enhancement of AR-mediated transactivation. Ran-binding decreases as the poly-Gln length increases. Interacts with HIP1 (via coiled coil domain). Interacts (via ligand-binding domain) with TRIM68. Interacts with TNK2. Interacts with USP26. Interacts with RNF6. Interacts (regulated by RNF6 probably through polyubiquitination) with RNF14; regulates AR transcriptional activity. Interacts with PRMT2 and TRIM24. Interacts with RACK1. Interacts with RANBP10; this interaction enhances dihydrotestosterone-induced AR transcriptional activity. Interacts with PRPF6 in a hormone-independent way; this interaction enhances dihydrotestosterone-induced AR transcriptional activity. Interacts with STK4/MST1. Interacts with ZIPK/DAPK3. Interacts with LPXN. Interacts with MAK. Part of a complex containing AR, MAK and NCOA3. Interacts with CRY1. Interacts with CCAR1 and GATA2. Interacts with ZNF318. Interacts with BUD31. Interacts with ARID4A. Interacts with ARID4B. Interacts (via NR LBD domain) with ZBTB7A; the interaction is direct and androgen-dependent. Interacts with NCOR1. Interacts with NCOR2. Interacts with CRY2 in a ligand-dependent manner. Post-translationally, phosphorylation by TNK2 enhances the DNA-binding and transcriptional activity. Phosphorylation at Ser-69 by CDK9 regulates AR promoter selectivity and cell growth. Sumoylated on Lys-394 (major) and Lys-513. Ubiquitinated. Deubiquitinated by USP26. 'Lys-6' and 'Lys-27'-linked polyubiquitination by RNF6 modulates AR transcriptional activity and specificity. In terms of processing, palmitoylated by ZDHHC7 and ZDHHC21. Palmitoylation is required for plasma membrane targeting and for rapid intracellular signaling via ERK and AKT kinases and cAMP generation.

The protein resides in the nucleus. The protein localises to the cytoplasm. Steroid hormone receptors are ligand-activated transcription factors that regulate eukaryotic gene expression and affect cellular proliferation and differentiation in target tissues. Transcription factor activity is modulated by bound coactivator and corepressor proteins like ZBTB7A that recruits NCOR1 and NCOR2 to the androgen response elements/ARE on target genes, negatively regulating androgen receptor signaling and androgen-induced cell proliferation. Transcription activation is also down-regulated by NR0B2. Activated, but not phosphorylated, by HIPK3 and ZIPK/DAPK3. This Crocuta crocuta (Spotted hyena) protein is Androgen receptor (AR).